Consider the following 128-residue polypeptide: Glycine cleavage system H protein (128 aa).

The Lipoyl-binding domain maps to Thr25–Thr107. Lys66 is subject to N6-lipoyllysine.

It belongs to the GcvH family. As to quaternary structure, the glycine cleavage system is composed of four proteins: P, T, L and H. (R)-lipoate serves as cofactor.

In terms of biological role, the glycine cleavage system catalyzes the degradation of glycine. The H protein shuttles the methylamine group of glycine from the P protein to the T protein. This is Glycine cleavage system H protein from Micrococcus luteus (strain ATCC 4698 / DSM 20030 / JCM 1464 / CCM 169 / CCUG 5858 / IAM 1056 / NBRC 3333 / NCIMB 9278 / NCTC 2665 / VKM Ac-2230) (Micrococcus lysodeikticus).